Consider the following 394-residue polypeptide: Elongation factor Tu 2 (394 aa).

The tr-type G domain occupies 10-204; sequence KPHVNVGTIG…ALDSYIPEPE (195 aa). Positions 19 to 26 are G1; the sequence is GHVDHGKT. 19 to 26 lines the GTP pocket; it reads GHVDHGKT. Thr26 contacts Mg(2+). A G2 region spans residues 60-64; sequence GITIN. Residues 81 to 84 are G3; sequence DCPG. Residues 81–85 and 136–139 contribute to the GTP site; these read DCPGH and NKCD. The interval 136 to 139 is G4; that stretch reads NKCD. Positions 174-176 are G5; that stretch reads SAL.

Belongs to the TRAFAC class translation factor GTPase superfamily. Classic translation factor GTPase family. EF-Tu/EF-1A subfamily. As to quaternary structure, monomer.

It is found in the cytoplasm. The enzyme catalyses GTP + H2O = GDP + phosphate + H(+). In terms of biological role, GTP hydrolase that promotes the GTP-dependent binding of aminoacyl-tRNA to the A-site of ribosomes during protein biosynthesis. The polypeptide is Elongation factor Tu 2 (Shewanella sp. (strain MR-4)).